The sequence spans 406 residues: GTPase Obg (406 aa).

Residues 1-159 (MRFVDEAVIT…REIRLELKVL (159 aa)) enclose the Obg domain. A disordered region spans residues 120-143 (GGEGGLGNTHFKSSTNRAPRKCTT). One can recognise an OBG-type G domain in the interval 160 to 333 (ADVGLLGMPN…VVYYLMDQIE (174 aa)). GTP is bound by residues 166–173 (GMPNAGKS), 191–195 (FTTMV), 213–216 (DIPG), 283–286 (NKLD), and 314–316 (SGL). Positions 173 and 193 each coordinate Mg(2+). The tract at residues 381 to 406 (ESMMDDDDDFDDDEDDGDVESIYVRD) is disordered. Positions 383–399 (MMDDDDDFDDDEDDGDV) are enriched in acidic residues.

Belongs to the TRAFAC class OBG-HflX-like GTPase superfamily. OBG GTPase family. As to quaternary structure, monomer. Mg(2+) is required as a cofactor.

The protein resides in the cytoplasm. An essential GTPase which binds GTP, GDP and possibly (p)ppGpp with moderate affinity, with high nucleotide exchange rates and a fairly low GTP hydrolysis rate. Plays a role in control of the cell cycle, stress response, ribosome biogenesis and in those bacteria that undergo differentiation, in morphogenesis control. The chain is GTPase Obg from Acinetobacter baumannii (strain ACICU).